The following is a 247-amino-acid chain: Sugar fermentation stimulation protein homolog (247 aa).

Belongs to the SfsA family.

This is Sugar fermentation stimulation protein homolog from Methylorubrum populi (strain ATCC BAA-705 / NCIMB 13946 / BJ001) (Methylobacterium populi).